The chain runs to 389 residues: Sulfate adenylyltransferase (389 aa).

The protein belongs to the sulfate adenylyltransferase family.

The enzyme catalyses sulfate + ATP + H(+) = adenosine 5'-phosphosulfate + diphosphate. Its pathway is sulfur metabolism; hydrogen sulfide biosynthesis; sulfite from sulfate: step 1/3. This is Sulfate adenylyltransferase from Desulforamulus reducens (strain ATCC BAA-1160 / DSM 100696 / MI-1) (Desulfotomaculum reducens).